The primary structure comprises 281 residues: Imidazole glycerol phosphate synthase subunit HisF (281 aa).

Residues aspartate 12 and aspartate 131 contribute to the active site. The disordered stretch occupies residues 256–281; it reads VRQAEPLPQPAREGLGDSARRAMSSG.

It belongs to the HisA/HisF family. Heterodimer of HisH and HisF.

The protein localises to the cytoplasm. It carries out the reaction 5-[(5-phospho-1-deoxy-D-ribulos-1-ylimino)methylamino]-1-(5-phospho-beta-D-ribosyl)imidazole-4-carboxamide + L-glutamine = D-erythro-1-(imidazol-4-yl)glycerol 3-phosphate + 5-amino-1-(5-phospho-beta-D-ribosyl)imidazole-4-carboxamide + L-glutamate + H(+). It functions in the pathway amino-acid biosynthesis; L-histidine biosynthesis; L-histidine from 5-phospho-alpha-D-ribose 1-diphosphate: step 5/9. In terms of biological role, IGPS catalyzes the conversion of PRFAR and glutamine to IGP, AICAR and glutamate. The HisF subunit catalyzes the cyclization activity that produces IGP and AICAR from PRFAR using the ammonia provided by the HisH subunit. The chain is Imidazole glycerol phosphate synthase subunit HisF from Thermosynechococcus vestitus (strain NIES-2133 / IAM M-273 / BP-1).